Consider the following 408-residue polypeptide: Argininosuccinate synthase (408 aa).

ATP-binding positions include 16-24 (AYSGGLDTS) and Ala44. Residues Tyr96 and Ser101 each contribute to the L-citrulline site. Position 126 (Gly126) interacts with ATP. L-aspartate contacts are provided by Thr128, Asn132, and Asp133. Asn132 is an L-citrulline binding site. Residues Arg136, Ser185, Ser194, Glu270, and Tyr282 each contribute to the L-citrulline site.

The protein belongs to the argininosuccinate synthase family. Type 1 subfamily. Homotetramer.

The protein resides in the cytoplasm. It carries out the reaction L-citrulline + L-aspartate + ATP = 2-(N(omega)-L-arginino)succinate + AMP + diphosphate + H(+). Its pathway is amino-acid biosynthesis; L-arginine biosynthesis; L-arginine from L-ornithine and carbamoyl phosphate: step 2/3. This Shewanella woodyi (strain ATCC 51908 / MS32) protein is Argininosuccinate synthase.